A 136-amino-acid chain; its full sequence is Large ribosomal subunit protein uL16 (136 aa).

Belongs to the universal ribosomal protein uL16 family. Part of the 50S ribosomal subunit.

In terms of biological role, binds 23S rRNA and is also seen to make contacts with the A and possibly P site tRNAs. In Vibrio vulnificus (strain YJ016), this protein is Large ribosomal subunit protein uL16.